Here is a 715-residue protein sequence, read N- to C-terminus: Fatty acid oxidation complex subunit alpha (715 aa).

Residues 1 to 190 are enoyl-CoA hydratase; the sequence is MTTTSAFMLN…KAGLVDDVVP (190 aa). The 3-hydroxyacyl-CoA dehydrogenase stretch occupies residues 306-715; it reads GPLNSVGILG…WTNGETDQGN (410 aa).

This sequence in the N-terminal section; belongs to the enoyl-CoA hydratase/isomerase family. The protein in the central section; belongs to the 3-hydroxyacyl-CoA dehydrogenase family. In terms of assembly, heterotetramer of two alpha chains (FadJ) and two beta chains (FadI).

It localises to the cytoplasm. It carries out the reaction a (3S)-3-hydroxyacyl-CoA = a (2E)-enoyl-CoA + H2O. The catalysed reaction is a 4-saturated-(3S)-3-hydroxyacyl-CoA = a (3E)-enoyl-CoA + H2O. The enzyme catalyses a (3S)-3-hydroxyacyl-CoA + NAD(+) = a 3-oxoacyl-CoA + NADH + H(+). It catalyses the reaction (3S)-3-hydroxybutanoyl-CoA = (3R)-3-hydroxybutanoyl-CoA. The protein operates within lipid metabolism; fatty acid beta-oxidation. In terms of biological role, catalyzes the formation of a hydroxyacyl-CoA by addition of water on enoyl-CoA. Also exhibits 3-hydroxyacyl-CoA epimerase and 3-hydroxyacyl-CoA dehydrogenase activities. The polypeptide is Fatty acid oxidation complex subunit alpha (Salmonella dublin (strain CT_02021853)).